Reading from the N-terminus, the 465-residue chain is tRNA-2-methylthio-N(6)-dimethylallyladenosine synthase (465 aa).

Positions Arg-5–Arg-125 constitute an MTTase N-terminal domain. [4Fe-4S] cluster-binding residues include Cys-14, Cys-50, Cys-88, Cys-166, Cys-170, and Cys-173. The 231-residue stretch at Arg-152–Gln-382 folds into the Radical SAM core domain. The TRAM domain maps to Arg-387–Lys-449.

It belongs to the methylthiotransferase family. MiaB subfamily. In terms of assembly, monomer. It depends on [4Fe-4S] cluster as a cofactor.

It localises to the cytoplasm. The catalysed reaction is N(6)-dimethylallyladenosine(37) in tRNA + (sulfur carrier)-SH + AH2 + 2 S-adenosyl-L-methionine = 2-methylsulfanyl-N(6)-dimethylallyladenosine(37) in tRNA + (sulfur carrier)-H + 5'-deoxyadenosine + L-methionine + A + S-adenosyl-L-homocysteine + 2 H(+). In terms of biological role, catalyzes the methylthiolation of N6-(dimethylallyl)adenosine (i(6)A), leading to the formation of 2-methylthio-N6-(dimethylallyl)adenosine (ms(2)i(6)A) at position 37 in tRNAs that read codons beginning with uridine. The chain is tRNA-2-methylthio-N(6)-dimethylallyladenosine synthase from Rhodopseudomonas palustris (strain BisA53).